The sequence spans 658 residues: NADPH-dependent diflavin oxidoreductase 1 (658 aa).

Positions 16 to 160 (LTILYMTQTG…ELGPWMNRFW (145 aa)) constitute a Flavodoxin-like domain. Residues 22–27 (TQTGTS), 69–72 (STTG), 107–116 (LGDSTYPRFC), and Asp142 each bind FMN. The region spanning 215-502 (QGWSISILDK…IKPGYLTLPP (288 aa)) is the FAD-binding FR-type domain. FAD is bound by residues Arg400, 430 to 433 (REFS), and 474 to 477 (GLCT). Residues Thr514, 574 to 575 (SR), and 580 to 584 (KTYVQ) contribute to the NADP(+) site. Trp657 contributes to the FAD binding site.

This sequence belongs to the NADPH-dependent diflavin oxidoreductase NDOR1 family. The protein in the N-terminal section; belongs to the flavodoxin family. In the C-terminal section; belongs to the flavoprotein pyridine nucleotide cytochrome reductase family. As to quaternary structure, interacts with DRE2; as part of the cytosolic iron-sulfur (Fe-S) protein assembly (CIA) machinery. The cofactor is FAD. FMN is required as a cofactor.

It is found in the cytoplasm. Its subcellular location is the mitochondrion. The enzyme catalyses 2 oxidized [2Fe-2S]-[protein] + NADPH = 2 reduced [2Fe-2S]-[protein] + NADP(+) + H(+). Its function is as follows. NADPH-dependent reductase which is a central component of the cytosolic iron-sulfur (Fe-S) protein assembly (CIA) machinery. Transfers electrons from NADPH via its FAD and FMN prosthetic groups to the [2Fe-2S] cluster of DRE2, another key component of the CIA machinery. In turn, this reduced cluster provides electrons for assembly of cytosolic iron-sulfur cluster proteins. Positively controls H(2)O(2)-induced cell death. This is NADPH-dependent diflavin oxidoreductase 1 from Mycosarcoma maydis (Corn smut fungus).